The sequence spans 893 residues: MKNKKALFIPLFIIILFIAFFNKIINFIINIKWFEEVNYLAVYFTKMRAIIILMIPIFIIFFISIWMYYKSLTINKNKSVVDIGLNKNNYGKKLFFIFNFIVSIFLAYIFSSSYWYRILQFNNSVDFNVKDPIFFKDVSFYIFKLPLFESLYKVIISLLLFLVITTFIAYFILEAKYKIQSRKDINLKNINHGIKSFAGKQLAIVSGLIILFISFGHLIKIWNLVYSSNGVSFGASYTDVHATLLFYKIIVVITLISSIVTLLSIVKGKFKPVSICIGITIFLIVSQNIASFLVQNFIVKSNEKTLEQPYIKNNIDLTRKAFALDDIEIRDFDIKNDLQKQDIADNKASIDNVRINSFKPTLEFYNQVQIIRYYYTFNDIDIDRYNINGKYNQVFLAAREIDTDALNPNTWQNRHLIYTHGFGAVMNKVNSVTSEGQPDFVIKDIPPYNKTNIKLTNPRIYFGEKTNDYVIVNTKINEFDYPREDSNKTNKYNGHAGIKTSFINRLLFAINKKDINFLLSKDIKKDSKIIINRNIVERAKKIAPFLTYDSDPYMVIYNGKIYWIIDAYTTTNRYPYSEPYDSINYIRNSAKVVIDSVDGDTNFYITDKKDPIVNNYAKIFKGLFKEEKDAPKEIREHFRYPKDLFSIQSKVLGKYHVKDPGVFYNGEDLWEVSKDQKHVEGETNTNDAPYIIMKLPDQNKEEMVLLNYFNVMKKDNMIALFGARMDGEQYGKKILYKLPSDKTVYSPYLFKQKINQDTNISKELSLWNREGSKVQYGDTIILPIKNSLLYIEPLYLRASGKNSIPEMKRVILSYNDKLVLSSSIQEGIKEIFNSKDNKINDKNEKDSTKTIDDSKLKKAQEYYNKAIEAQKNGDWTKYGENINELGNILNSIK.

Transmembrane regions (helical) follow at residues 9-29 (IPLF…NFII), 49-69 (AIII…WMYY), 94-114 (LFFI…SSSY), 154-174 (VIIS…FILE), 202-222 (LAIV…IKIW), 246-266 (FYKI…LSIV), and 273-293 (VSIC…ASFL).

This sequence belongs to the UPF0182 family.

Its subcellular location is the cell membrane. This chain is UPF0182 protein CLI_0022, found in Clostridium botulinum (strain Langeland / NCTC 10281 / Type F).